The primary structure comprises 1072 residues: DNA-directed RNA polymerase subunit beta (1072 aa).

This sequence belongs to the RNA polymerase beta chain family. In plastids the minimal PEP RNA polymerase catalytic core is composed of four subunits: alpha, beta, beta', and beta''. When a (nuclear-encoded) sigma factor is associated with the core the holoenzyme is formed, which can initiate transcription.

The protein localises to the plastid. Its subcellular location is the chloroplast. It catalyses the reaction RNA(n) + a ribonucleoside 5'-triphosphate = RNA(n+1) + diphosphate. DNA-dependent RNA polymerase catalyzes the transcription of DNA into RNA using the four ribonucleoside triphosphates as substrates. The protein is DNA-directed RNA polymerase subunit beta of Eucalyptus globulus subsp. globulus (Tasmanian blue gum).